A 219-amino-acid polypeptide reads, in one-letter code: Octanoyltransferase (219 aa).

One can recognise a BPL/LPL catalytic domain in the interval 32 to 207 (ADSGDEIWLL…HLVRQLGYAQ (176 aa)). Residues 71 to 78 (RGGQVTYH), 138 to 140 (SLG), and 151 to 153 (GLA) each bind substrate. Cys169 functions as the Acyl-thioester intermediate in the catalytic mechanism.

This sequence belongs to the LipB family.

It is found in the cytoplasm. It carries out the reaction octanoyl-[ACP] + L-lysyl-[protein] = N(6)-octanoyl-L-lysyl-[protein] + holo-[ACP] + H(+). It participates in protein modification; protein lipoylation via endogenous pathway; protein N(6)-(lipoyl)lysine from octanoyl-[acyl-carrier-protein]: step 1/2. Catalyzes the transfer of endogenously produced octanoic acid from octanoyl-acyl-carrier-protein onto the lipoyl domains of lipoate-dependent enzymes. Lipoyl-ACP can also act as a substrate although octanoyl-ACP is likely to be the physiological substrate. The sequence is that of Octanoyltransferase from Stutzerimonas stutzeri (strain A1501) (Pseudomonas stutzeri).